Consider the following 288-residue polypeptide: Mortality factor 4-like protein 2 (288 aa).

A compositionally biased stretch (polar residues) spans 1-15; sequence MSSRKQGSQPRGQQS. The disordered stretch occupies residues 1 to 113; the sequence is MSSRKQGSQP…RADPTVESEE (113 aa). Position 71 is a phosphoserine (serine 71). The MRG domain occupies 117 to 288; the sequence is NRMEVKVKIP…ASAEYHRKAL (172 aa).

As to quaternary structure, component of the NuA4 histone acetyltransferase complex which contains the catalytic subunit KAT5/TIP60 and the subunits EP400, TRRAP/PAF400, BRD8/SMAP, EPC1, DMAP1/DNMAP1, RUVBL1/TIP49, RUVBL2, ING3, actin, ACTL6A/BAF53A, MORF4L1/MRG15, MORF4L2/MRGX, MRGBP, YEATS4/GAS41 and VPS72/YL1. The NuA4 complex interacts with MYC and the adenovirus E1A protein. MORF4L1 may also participate in the formation of NuA4 related complexes which lack the KAT5/TIP60 catalytic subunit, but which include the SWI/SNF related protein SRCAP. Component of the MSIN3A histone deacetylase complex, which includes SIN3A, HDAC2, ARID4B, MORF4L1, RBBP4/RbAp48, and RBBP7/RbAp46. Interacts with MRFAP1 and RB1. May also interact with one or more as yet undefined members of the TLE (transducin-like enhancer of split) family of transcriptional repressors.

It is found in the nucleus. Its function is as follows. Component of the NuA4 histone acetyltransferase complex which is involved in transcriptional activation of select genes principally by acetylation of nucleosomal histone H4 and H2A. This modification may both alter nucleosome - DNA interactions and promote interaction of the modified histones with other proteins which positively regulate transcription. This complex may be required for the activation of transcriptional programs associated with oncogene and proto-oncogene mediated growth induction, tumor suppressor mediated growth arrest and replicative senescence, apoptosis, and DNA repair. The NuA4 complex ATPase and helicase activities seem to be, at least in part, contributed by the association of RUVBL1 and RUVBL2 with EP400. NuA4 may also play a direct role in DNA repair when directly recruited to sites of DNA damage. Also a component of the MSIN3A complex which acts to repress transcription by deacetylation of nucleosomal histones. The polypeptide is Mortality factor 4-like protein 2 (MORF4L2) (Homo sapiens (Human)).